Here is a 203-residue protein sequence, read N- to C-terminus: Dephospho-CoA kinase (203 aa).

The 198-residue stretch at Ile-4–His-201 folds into the DPCK domain. Gly-12–Arg-17 lines the ATP pocket.

Belongs to the CoaE family.

The protein resides in the cytoplasm. It carries out the reaction 3'-dephospho-CoA + ATP = ADP + CoA + H(+). It participates in cofactor biosynthesis; coenzyme A biosynthesis; CoA from (R)-pantothenate: step 5/5. Catalyzes the phosphorylation of the 3'-hydroxyl group of dephosphocoenzyme A to form coenzyme A. The protein is Dephospho-CoA kinase of Nitrosomonas europaea (strain ATCC 19718 / CIP 103999 / KCTC 2705 / NBRC 14298).